A 1488-amino-acid polypeptide reads, in one-letter code: Chromosome partition protein MukB (1488 aa).

34–41 (GGNGAGKS) is a binding site for ATP. Coiled coils occupy residues 326 to 418 (LEAD…QYNQ), 444 to 472 (LDTFQAKEQEATEKLLSLEQKMSVAQTAH), and 509 to 602 (RHLA…RRAP). Residues 666-783 (PGGAEDQRLN…SLPIFGRAAR (118 aa)) are flexible hinge. Coiled-coil stretches lie at residues 835–923 (EAEI…AKLE), 977–1116 (EMLS…AKAG), and 1209–1265 (VEAI…LQSV). Residues 1049–1074 (ADSGAEERARQRRDELHAQLSNNRSR) form a disordered region. The segment covering 1051-1065 (SGAEERARQRRDELH) has biased composition (basic and acidic residues).

The protein belongs to the SMC family. MukB subfamily. In terms of assembly, homodimerization via its hinge domain. Binds to DNA via its C-terminal region. Interacts, and probably forms a ternary complex, with MukE and MukF via its C-terminal region. The complex formation is stimulated by calcium or magnesium. Interacts with tubulin-related protein FtsZ.

It localises to the cytoplasm. Its subcellular location is the nucleoid. Functionally, plays a central role in chromosome condensation, segregation and cell cycle progression. Functions as a homodimer, which is essential for chromosome partition. Involved in negative DNA supercoiling in vivo, and by this means organize and compact chromosomes. May achieve or facilitate chromosome segregation by condensation DNA from both sides of a centrally located replisome during cell division. This chain is Chromosome partition protein MukB, found in Salmonella agona (strain SL483).